A 1040-amino-acid polypeptide reads, in one-letter code: Multidrug resistance protein MdtB (1040 aa).

The next 12 membrane-spanning stretches (helical) occupy residues L25–A45, L347–A367, I369–L389, L396–I416, I440–F460, F472–P492, W537–I557, L863–V883, F888–A908, I910–I930, I968–V988, and I998–I1018.

Belongs to the resistance-nodulation-cell division (RND) (TC 2.A.6) family. MdtB subfamily. Part of a tripartite efflux system composed of MdtA, MdtB and MdtC. MdtB forms a heteromultimer with MdtC.

The protein localises to the cell inner membrane. The protein is Multidrug resistance protein MdtB of Salmonella paratyphi A (strain ATCC 9150 / SARB42).